A 369-amino-acid chain; its full sequence is Polycomb group protein FERTILIZATION-INDEPENDENT ENDOSPERM (369 aa).

WD repeat units lie at residues 31–73 (EGKK…AISA), 81–123 (DKEE…IHKS), 126–166 (GHGD…CILI), 172–212 (GHRY…TYVE), 238–275 (IHTN…NSPG), 287–328 (VPMC…PVLI), and 335–368 (QSKS…DVIT).

The protein belongs to the WD repeat ESC family. In terms of assembly, interacts directly with MEA. These two proteins are probably indirectly associated with FIS2. In plants, PcG complexes are probably composed of a member of the EZ family (CLF or MEA), FIE, and a member of the VEFS family (FIS2, VRN2 or EMF2). Component of the plant homeodomain / polycomb repressive complex 2 (PHD-PRC2) large complex during prolonged cold, composed of core PRC2 components (VRN2, EZA1, FIE and MSI1), and three related PHD finger proteins (VIL1, VIL2 and VIN3) that mediates histone H3 trimethylation on 'Lys-27' (H3K27me3). Binds to ALP1. As to expression, expressed in cauline leaves, root and stems. In the male reproductive organ, it is expressed in the developing anther; and is abundant in microspore mother cells, in microsporocytes and in the tapetum, but is absent from vascular bundles, the connective tissue and the filament. It is also absent from pollen grains at subsequent developmental stages. In the developing female reproductive organs, it is highly expressed in all cells of the young ovules primordium before archesporial differentiation. Then, it is highly expressed in the ovule sporophytic tissue and the megaspore mother cell before meiosis, but is absent from placenta or the developing carpel. Then, it decreases.

Its subcellular location is the nucleus. In terms of biological role, polycomb group (PcG) protein. PcG proteins act by forming multiprotein complexes, which are required to maintain the transcriptionally repressive state of homeotic genes throughout development. PcG proteins are not required to initiate repression, but to maintain it during later stages of development. They probably act via the methylation of histones, rendering chromatin heritably changed in its expressibility. Required to prevent the proliferation of the central cell by repressing unknown target genes before fertilization. Probably also involved in floral repression mechanism established during early plant development. Regulates the anteroposterior organization of the endosperm. Interacts with the promoter and represses the transcription of genes such as PHE1, that are paternally active and maternally silenced. The protein is Polycomb group protein FERTILIZATION-INDEPENDENT ENDOSPERM (FIE) of Arabidopsis thaliana (Mouse-ear cress).